Consider the following 429-residue polypeptide: High mobility group nucleosome-binding domain-containing protein 5 (429 aa).

The disordered stretch occupies residues 1–429 (MPKRKAAGDA…GEKGEPVSTV (429 aa)). At threonine 29 the chain carries Phosphothreonine. Over residues 35 to 44 (KRASTSRKTK) the composition is skewed to basic residues. Lysine 64 participates in a covalent cross-link: Glycyl lysine isopeptide (Lys-Gly) (interchain with G-Cter in SUMO2). Position 90 is a phosphoserine (serine 90). 2 stretches are compositionally biased toward basic and acidic residues: residues 92 to 101 (METEEVKEQI) and 109 to 124 (GGEK…KNDE). A Glycyl lysine isopeptide (Lys-Gly) (interchain with G-Cter in SUMO1); alternate cross-link involves residue lysine 98. Lysine 98 participates in a covalent cross-link: Glycyl lysine isopeptide (Lys-Gly) (interchain with G-Cter in SUMO2); alternate. Residue lysine 121 forms a Glycyl lysine isopeptide (Lys-Gly) (interchain with G-Cter in SUMO2) linkage. Acidic residues predominate over residues 133–152 (EKDEDEKEHEDTGEEGEDGE). Positions 153–195 (REGGLKEKPDVAEIEDAKEAKDDEEKEDKEKEDDKGGDGKKEE) are enriched in basic and acidic residues. The segment covering 196–209 (EKDDEGEAETEEEV) has biased composition (acidic residues). 2 stretches are compositionally biased toward basic and acidic residues: residues 210–387 (KEQQ…NEDR) and 413–429 (NKDF…VSTV).

The protein belongs to the HMGN family. In terms of tissue distribution, expressed in trophoblast giant cells.

The protein localises to the nucleus. Preferentially binds to euchromatin and modulates cellular transcription by counteracting linker histone-mediated chromatin compaction. The polypeptide is High mobility group nucleosome-binding domain-containing protein 5 (Rattus norvegicus (Rat)).